Reading from the N-terminus, the 369-residue chain is MSERRIHYSQLKNDNLNQISPSSAPSPITLNHQLTDSSSSSSSGGNNRISPIILFIIVLLSVIFFICSILHLLVRYYLKKKRSNLSSSPNESNQNPEFSDSDTYQRQLQQLFHLHDSGLDQALIDALPVFLYKEIKGTKEPFDCAVCLCEFSEDDKLRLLPNCSHAFHIDCIDTWLLSNSTCPLCRGTLFSLGHQFEYPDFNFGFFAGDDGGGGVRVSPVQKPAENEIGKRVFSVRLGKFRSSNIVNNGEVVVGGGGETSSSSLDNRRCFSMGSYQYIVAESDLVVALCPNNEGLKNNKDVEGKKINMRSKGESFSVSKIWQWSNKRSKFPNNHPSETNLVVGGSSSSSSYVCSGSDGLSLNGRRFQGP.

A helical transmembrane segment spans residues 52 to 72 (IILFIIVLLSVIFFICSILHL). An RING-type; atypical zinc finger spans residues 144–186 (CAVCLCEFSEDDKLRLLPNCSHAFHIDCIDTWLLSNSTCPLCR). The segment at 332–355 (NNHPSETNLVVGGSSSSSSYVCSG) is disordered. The segment covering 341 to 355 (VVGGSSSSSSYVCSG) has biased composition (low complexity).

Belongs to the RING-type zinc finger family. ATL subfamily.

Its subcellular location is the membrane. The enzyme catalyses S-ubiquitinyl-[E2 ubiquitin-conjugating enzyme]-L-cysteine + [acceptor protein]-L-lysine = [E2 ubiquitin-conjugating enzyme]-L-cysteine + N(6)-ubiquitinyl-[acceptor protein]-L-lysine.. It participates in protein modification; protein ubiquitination. This Arabidopsis thaliana (Mouse-ear cress) protein is RING-H2 finger protein ATL47 (ATL47).